The sequence spans 431 residues: Glucose-1-phosphate adenylyltransferase (431 aa).

Lys39 provides a ligand contact to beta-D-fructose 1,6-bisphosphate. Positions 40, 46, and 52 each coordinate AMP. Tyr114 contacts alpha-D-glucose 1-phosphate. Arg130 is a binding site for AMP. Alpha-D-glucose 1-phosphate-binding positions include Gly179, 194–195 (EK), and Ser212. Residue Arg386 participates in AMP binding. 429-431 (QER) is a binding site for beta-D-fructose 1,6-bisphosphate.

It belongs to the bacterial/plant glucose-1-phosphate adenylyltransferase family. Homotetramer.

The catalysed reaction is alpha-D-glucose 1-phosphate + ATP + H(+) = ADP-alpha-D-glucose + diphosphate. The protein operates within glycan biosynthesis; glycogen biosynthesis. Its activity is regulated as follows. Allosterically activated by fructose-1,6-bisphosphate (F16BP) and inhibited by AMP. Functionally, involved in the biosynthesis of ADP-glucose, a building block required for the elongation reactions to produce glycogen. Catalyzes the reaction between ATP and alpha-D-glucose 1-phosphate (G1P) to produce pyrophosphate and ADP-Glc. This Klebsiella pneumoniae (strain 342) protein is Glucose-1-phosphate adenylyltransferase.